Reading from the N-terminus, the 300-residue chain is Ribosomal RNA small subunit methyltransferase H (300 aa).

Residues 43–45 (AGH), aspartate 60, aspartate 105, and glutamine 112 each bind S-adenosyl-L-methionine.

It belongs to the methyltransferase superfamily. RsmH family.

The protein localises to the cytoplasm. It carries out the reaction cytidine(1402) in 16S rRNA + S-adenosyl-L-methionine = N(4)-methylcytidine(1402) in 16S rRNA + S-adenosyl-L-homocysteine + H(+). Specifically methylates the N4 position of cytidine in position 1402 (C1402) of 16S rRNA. This is Ribosomal RNA small subunit methyltransferase H from Deinococcus deserti (strain DSM 17065 / CIP 109153 / LMG 22923 / VCD115).